Consider the following 361-residue polypeptide: Chorismate synthase (361 aa).

R48 lines the NADP(+) pocket. Residues 125 to 127 (RSS), 238 to 239 (NA), G278, 293 to 297 (KPTSS), and R319 each bind FMN.

The protein belongs to the chorismate synthase family. Homotetramer. FMNH2 is required as a cofactor.

The enzyme catalyses 5-O-(1-carboxyvinyl)-3-phosphoshikimate = chorismate + phosphate. It participates in metabolic intermediate biosynthesis; chorismate biosynthesis; chorismate from D-erythrose 4-phosphate and phosphoenolpyruvate: step 7/7. Its function is as follows. Catalyzes the anti-1,4-elimination of the C-3 phosphate and the C-6 proR hydrogen from 5-enolpyruvylshikimate-3-phosphate (EPSP) to yield chorismate, which is the branch point compound that serves as the starting substrate for the three terminal pathways of aromatic amino acid biosynthesis. This reaction introduces a second double bond into the aromatic ring system. The polypeptide is Chorismate synthase (Aliivibrio fischeri (strain MJ11) (Vibrio fischeri)).